The sequence spans 114 residues: MIEFYFNKKRRLITPNDFNYVFKSPNVIRCKEITILGRLNLLSFSRLGISVSRKNVKYAYQRNKIKRLIRENFRIIQHRLVSSDFVVIVNSSSMQISFKLLAKKLENLWSYYYQ.

The protein belongs to the RnpA family. In terms of assembly, consists of a catalytic RNA component (M1 or rnpB) and a protein subunit.

It carries out the reaction Endonucleolytic cleavage of RNA, removing 5'-extranucleotides from tRNA precursor.. Its function is as follows. RNaseP catalyzes the removal of the 5'-leader sequence from pre-tRNA to produce the mature 5'-terminus. It can also cleave other RNA substrates such as 4.5S RNA. The protein component plays an auxiliary but essential role in vivo by binding to the 5'-leader sequence and broadening the substrate specificity of the ribozyme. This Buchnera aphidicola subsp. Baizongia pistaciae (strain Bp) protein is Ribonuclease P protein component.